The chain runs to 484 residues: Cobyric acid synthase (484 aa).

The GATase cobBQ-type domain maps to 248 to 435; sequence VLKVIVPVLP…LHGLFEGSQS (188 aa). The Nucleophile role is filled by cysteine 329. Residue histidine 427 is part of the active site.

The protein belongs to the CobB/CobQ family. CobQ subfamily.

It functions in the pathway cofactor biosynthesis; adenosylcobalamin biosynthesis. Functionally, catalyzes amidations at positions B, D, E, and G on adenosylcobyrinic A,C-diamide. NH(2) groups are provided by glutamine, and one molecule of ATP is hydrogenolyzed for each amidation. The protein is Cobyric acid synthase of Pseudomonas putida (strain GB-1).